Consider the following 156-residue polypeptide: Regulatory protein RecX (156 aa).

Belongs to the RecX family.

It is found in the cytoplasm. Its function is as follows. Modulates RecA activity. The polypeptide is Regulatory protein RecX (Pseudomonas putida (strain ATCC 47054 / DSM 6125 / CFBP 8728 / NCIMB 11950 / KT2440)).